The sequence spans 184 residues: uncharacterized protein (184 aa).

Residues 35-55 (LSFLIYILYTFSISGLSTFVI) traverse the membrane as a helical segment.

The protein resides in the membrane. This is an uncharacterized protein from Schizosaccharomyces pombe (strain 972 / ATCC 24843) (Fission yeast).